The following is a 351-amino-acid chain: DNA polymerase IV (351 aa).

The region spanning 4-185 (IIHVDMDCFF…LPLAKIPGVG (182 aa)) is the UmuC domain. Mg(2+) is bound by residues D8 and D103. The active site involves E104.

This sequence belongs to the DNA polymerase type-Y family. As to quaternary structure, monomer. Mg(2+) is required as a cofactor.

It is found in the cytoplasm. The enzyme catalyses DNA(n) + a 2'-deoxyribonucleoside 5'-triphosphate = DNA(n+1) + diphosphate. Its function is as follows. Poorly processive, error-prone DNA polymerase involved in untargeted mutagenesis. Copies undamaged DNA at stalled replication forks, which arise in vivo from mismatched or misaligned primer ends. These misaligned primers can be extended by PolIV. Exhibits no 3'-5' exonuclease (proofreading) activity. May be involved in translesional synthesis, in conjunction with the beta clamp from PolIII. This is DNA polymerase IV from Escherichia coli O9:H4 (strain HS).